The primary structure comprises 324 residues: tRNA uridine(34) hydroxylase (324 aa).

One can recognise a Rhodanese domain in the interval 127–221; it reads QQEETIVIDA…YGKDPEVQGE (95 aa). The Cysteine persulfide intermediate role is filled by cysteine 181.

It belongs to the TrhO family.

It carries out the reaction uridine(34) in tRNA + AH2 + O2 = 5-hydroxyuridine(34) in tRNA + A + H2O. Functionally, catalyzes oxygen-dependent 5-hydroxyuridine (ho5U) modification at position 34 in tRNAs. This is tRNA uridine(34) hydroxylase from Bacillus cytotoxicus (strain DSM 22905 / CIP 110041 / 391-98 / NVH 391-98).